We begin with the raw amino-acid sequence, 400 residues long: Formate-dependent phosphoribosylglycinamide formyltransferase (400 aa).

N(1)-(5-phospho-beta-D-ribosyl)glycinamide-binding positions include 22 to 23 (EL) and Glu82. ATP-binding positions include Arg115, Lys157, 162–167 (SSGKGQ), 197–200 (EGFI), and Glu205. The 196-residue stretch at 120 to 315 (RLAAETLGLP…EFELHARAIL (196 aa)) folds into the ATP-grasp domain. Mg(2+)-binding residues include Glu274 and Glu286. N(1)-(5-phospho-beta-D-ribosyl)glycinamide contacts are provided by residues Asp293, Lys362, and 369–370 (RR).

The protein belongs to the PurK/PurT family. As to quaternary structure, homodimer.

It catalyses the reaction N(1)-(5-phospho-beta-D-ribosyl)glycinamide + formate + ATP = N(2)-formyl-N(1)-(5-phospho-beta-D-ribosyl)glycinamide + ADP + phosphate + H(+). The protein operates within purine metabolism; IMP biosynthesis via de novo pathway; N(2)-formyl-N(1)-(5-phospho-D-ribosyl)glycinamide from N(1)-(5-phospho-D-ribosyl)glycinamide (formate route): step 1/1. In terms of biological role, involved in the de novo purine biosynthesis. Catalyzes the transfer of formate to 5-phospho-ribosyl-glycinamide (GAR), producing 5-phospho-ribosyl-N-formylglycinamide (FGAR). Formate is provided by PurU via hydrolysis of 10-formyl-tetrahydrofolate. The protein is Formate-dependent phosphoribosylglycinamide formyltransferase of Cupriavidus metallidurans (strain ATCC 43123 / DSM 2839 / NBRC 102507 / CH34) (Ralstonia metallidurans).